The following is a 359-amino-acid chain: ATP-dependent (S)-NAD(P)H-hydrate dehydratase (359 aa).

The YjeF C-terminal domain occupies 61-350 (LLEEARKVVP…SEINSVFVNN (290 aa)). Residues G161 and 214 to 220 (NVVEFQR) each bind (6S)-NADPHX. Residues 256–260 (KGEVD) and 275–284 (GSPRRCGGQG) each bind ATP. D285 contributes to the (6S)-NADPHX binding site.

The protein belongs to the NnrD/CARKD family. It depends on Mg(2+) as a cofactor.

The enzyme catalyses (6S)-NADHX + ATP = ADP + phosphate + NADH + H(+). It carries out the reaction (6S)-NADPHX + ATP = ADP + phosphate + NADPH + H(+). In terms of biological role, catalyzes the dehydration of the S-form of NAD(P)HX at the expense of ATP, which is converted to ADP. Together with NAD(P)HX epimerase, which catalyzes the epimerization of the S- and R-forms, the enzyme allows the repair of both epimers of NAD(P)HX, a damaged form of NAD(P)H that is a result of enzymatic or heat-dependent hydration. The chain is ATP-dependent (S)-NAD(P)H-hydrate dehydratase from Ciona intestinalis (Transparent sea squirt).